We begin with the raw amino-acid sequence, 312 residues long: Large ribosomal subunit protein uL15m (312 aa).

The interval 63-89 (RIRKGRGPSSGYGKTAGRGTKGQKAHG) is disordered. Residues 70–82 (PSSGYGKTAGRGT) show a composition bias toward gly residues.

This sequence belongs to the universal ribosomal protein uL15 family. In terms of assembly, component of the mitochondrial large ribosomal subunit (mt-LSU). Mature N.crassa 74S mitochondrial ribosomes consist of a small (37S) and a large (54S) subunit. The 37S small subunit contains a 16S ribosomal RNA (16S mt-rRNA) and 32 different proteins. The 54S large subunit contains a 23S rRNA (23S mt-rRNA) and 42 different proteins.

Its subcellular location is the mitochondrion. Its function is as follows. Component of the mitochondrial ribosome (mitoribosome), a dedicated translation machinery responsible for the synthesis of mitochondrial genome-encoded proteins, including at least some of the essential transmembrane subunits of the mitochondrial respiratory chain. The mitoribosomes are attached to the mitochondrial inner membrane and translation products are cotranslationally integrated into the membrane. The sequence is that of Large ribosomal subunit protein uL15m (mrpl10) from Neurospora crassa (strain ATCC 24698 / 74-OR23-1A / CBS 708.71 / DSM 1257 / FGSC 987).